The primary structure comprises 343 residues: Twinfilin (343 aa).

ADF-H domains are found at residues 4 to 139 (QTGI…KHKV) and 177 to 312 (GINC…EELH). The disordered stretch occupies residues 314-343 (RKLNLRPQFSKPKGPPSRGAKRLTKPQAVE).

The protein belongs to the actin-binding proteins ADF family. Twinfilin subfamily. As to quaternary structure, interacts with G-actin; ADP-actin form.

The protein localises to the cytoplasm. It localises to the cytoskeleton. It is found in the cell cortex. Functionally, actin-binding protein involved in motile and morphological processes. Inhibits actin polymerization, likely by sequestering G-actin. The protein is Twinfilin (twf) of Anopheles gambiae (African malaria mosquito).